Consider the following 191-residue polypeptide: RNA pyrophosphohydrolase (191 aa).

A Nudix hydrolase domain is found at 6 to 149 (GYRLNVGIIL…KREVYRQALS (144 aa)). The Nudix box motif lies at 38–59 (GGIKVDEDPDAAMFRELYEEVG). The disordered stretch occupies residues 162-191 (GAQAVSDAGGTATRQIPVATEPSGPSSSQR).

The protein belongs to the Nudix hydrolase family. RppH subfamily. Requires a divalent metal cation as cofactor.

Functionally, accelerates the degradation of transcripts by removing pyrophosphate from the 5'-end of triphosphorylated RNA, leading to a more labile monophosphorylated state that can stimulate subsequent ribonuclease cleavage. This is RNA pyrophosphohydrolase from Methylococcus capsulatus (strain ATCC 33009 / NCIMB 11132 / Bath).